Reading from the N-terminus, the 408-residue chain is MLSRRTLDCCLVMLIVSTTFCQELHFYKEKADRSHENLKTAVNQFGIHLCRRLLNEGKNIIFSPFSLSTALSMAFVGARGNTAIEMRSGLGFREAGLAQEDVPDSFYQAFQLLKSDQSGDKFYVANTALVQNNYNILNSYKRILHRKFYSDIQPVDFVRNGLWVKEMVNKWVSNITHNKITSLIDKPLSPLTRLFLLNAVYFKGSWKTQFDRKRTTLSLFYNNNKVARRVEMMSLTNKFPYTYDSELKCQVLELPYDGDKTSMIFILPEWDVRLKHVENALSAQSVKQLINNLQDTEIVVTIPKFKLENSPQIKEYLQVMGMNEAFSFSADFSGMNGRRNLFVKDVLHKAMIDVNEEGSEAAAVSGVVVMLKSASHNLPTFVANHPFMFLIINKESGMILFLGSVREL.

An N-terminal signal peptide occupies residues 1-22 (MLSRRTLDCCLVMLIVSTTFCQ). Residues Cys-50 and Cys-249 are joined by a disulfide bond. Asn-174 carries an N-linked (GlcNAc...) asparagine glycan.

This sequence belongs to the serpin family. In terms of assembly, monomer. Forms a covalent heterodimer with clotting factor C chain B. Forms a covalent heterodimer with proclotting enzyme heavy chain. Specifically expressed in hemocytes (at protein level).

It localises to the secreted. Serine protease inhibitor that inhibits proclotting enzyme and to a lesser extent clotting factor C and clotting factor G. The chain is Intracellular coagulation inhibitor 2 from Tachypleus tridentatus (Japanese horseshoe crab).